Consider the following 500-residue polypeptide: NAD(P)H-quinone oxidoreductase chain 4, chloroplastic (500 aa).

14 helical membrane-spanning segments follow: residues 4–24 (FPWL…MLFL), 35–55 (YTIC…CYNF), 87–107 (IGTI…AFPV), 113–130 (LFHF…GSFS), 134–154 (LLLF…LLSM), 167–187 (FILY…GISL), 211–231 (ILFY…IPLH), 242–262 (HYST…YGLV), 272–292 (AHSM…IYAA), 305–325 (IAYS…SITD), 330–350 (GAIL…FLAG), 386–406 (LALP…GIIT), 416–436 (ILII…LLSM), and 462–482 (LFLS…PDFV).

The protein belongs to the complex I subunit 4 family.

The protein localises to the plastid. It localises to the chloroplast thylakoid membrane. It catalyses the reaction a plastoquinone + NADH + (n+1) H(+)(in) = a plastoquinol + NAD(+) + n H(+)(out). The enzyme catalyses a plastoquinone + NADPH + (n+1) H(+)(in) = a plastoquinol + NADP(+) + n H(+)(out). The protein is NAD(P)H-quinone oxidoreductase chain 4, chloroplastic of Olimarabidopsis pumila (Dwarf rocket).